Consider the following 870-residue polypeptide: H(+)/Cl(-) exchange transporter 6 (870 aa).

Over 1-80 (MAGCRGSVCC…KKGRRYEAVK (80 aa)) the chain is Cytoplasmic. 2 helical membrane passes run 81-113 (WMVV…FGVV) and 128-150 (LSLL…LVLI). Residues 156–160 (GSGIP) carry the Selectivity filter part_1 motif. Ser-157 lines the chloride pocket. Residues 159–166 (IPEIKCYL) constitute an intramembrane region (helical). Transmembrane regions (helical) follow at residues 176-194 (RLRT…VSGG) and 200-217 (EGPM…LPQF). The Selectivity filter part_2 motif lies at 198 to 202 (GKEGP). 2 consecutive intramembrane regions (helical) follow at residues 241–253 (FVSA…VAAA) and 257–265 (PIGGTLFSL). 3 helical membrane passes run 277–294 (TWKV…LNFF), 335–364 (GFFV…YRMR), and 371–392 (KLVR…VFVA). N-linked (GlcNAc...) asparagine glycans are attached at residues Asn-410, Asn-423, and Asn-433. 2 helical membrane-spanning segments follow: residues 463-482 (PVTL…WTFG) and 488-512 (GLFV…KSYI). The Selectivity filter part_3 motif lies at 488-492 (GLFVP). Chloride is bound at residue Phe-490. Residues 520–534 (GTFALIGAAAFLGGV) constitute an intramembrane region (helical). The note=Loop between two helices intramembrane region spans 535–537 (VRM). The helical intramembrane region spans 538–549 (TISLTVILIEST). Positions 550–553 (NEIT) form an intramembrane region, note=Loop between two helices. The chain crosses the membrane as a helical span at residues 554 to 572 (YGLPIMVTLMVAKWTGDLF). The Cytoplasmic portion of the chain corresponds to 573 to 870 (NKGIYDVHIG…ARLRQHYQTL (298 aa)). A chloride-binding site is contributed by Tyr-577. Positions 606–663 (MEPNLTYVYPHTRIQSLVSILRTTVHHAFPVVTENRGNEKEFMKGNQLISNNIKFKKS) constitute a CBS 1 domain. 631 to 633 (HHA) provides a ligand contact to ATP. Ser-774 carries the post-translational modification Phosphoserine. The 62-residue stretch at 808 to 869 (MNPSPFTVSP…QARLRQHYQT (62 aa)) folds into the CBS 2 domain. 850-853 (TRHN) serves as a coordination point for ATP.

It belongs to the chloride channel (TC 2.A.49) family. ClC-6/CLCN6 subfamily. N-glycosylated on several asparagine residues. As to expression, detected in whole brain and in hippocampus neurons (at protein level). Detected in brain, trigeminus, dorsal root ganglion, spinal cord, eye, kidney, testis, skeletal muscle, thymus and pancreas. Isoform ClC-6c is expressed only in kidney.

The protein resides in the late endosome membrane. It carries out the reaction 2 chloride(in) + H(+)(out) = 2 chloride(out) + H(+)(in). Functionally, voltage-gated channel mediating the exchange of chloride ions against protons. Functions as antiporter and contributes to the acidification of the late endosome lumen. The CLC channel family contains both chloride channels and proton-coupled anion transporters that exchange chloride or another anion for protons. The presence of conserved gating glutamate residues is typical for family members that function as antiporters. This is H(+)/Cl(-) exchange transporter 6 from Mus musculus (Mouse).